Reading from the N-terminus, the 793-residue chain is MTLASPPQIKPLTDEELHKINAYWRAANYLSVGQIYLLDNPLLREPLNKEHVKPRLLGHWGTTPGLNFIYVHLNRIIKKYDQSMVYIAGPGHGGPGLVANTYLEGTYSEYYPNISQDAGGMQKLFKQFSFPGGIPSHVAPETPGSIHEGGELGYALVHAFGAAFDNPDLIVAAVVGDGEAETGALATSWHSNKFLNPASDGAVLPILHLNGYKIANPTVLARLSYEELESLFVGYGYKPYFVEGSDPALVHQQMAAILDTVIAEIHSIQREARVHGFSKRPQWPMIILRTPKGWTGPKEVDGKKTEDYWRSHQVPFGNVTGNPEHLKLLEEWLKSYKPEELFDANGKLIPELAELAPKGDRRMGDNPHANGGILLRDLVMPDFQNYAIEVPQPGRVMAEATQVTGKFLRDVMKLNLDSRNFRVFGPDETASNRINAVLDVTDRTWVAQKLPEDDHLDPSGRVMEILSETCCQGWLEGYLLTGRHGFFSCYEAFIHIIDSMFNQHAKWLKTTRHISWRRPVASLNYLLTSHVWRQDHNGFSHQDPGFIDHVVNKKSEIIRVYLPPDANTLLSVTDHCLRSRNYVNVIVAGKQPALQFLDMDAAVKHCTKGIGIWEWASNDQGSEPDVVMACAGDVPTLETLAAVDILRQHFPDLKVRVVNVVDLMTLQPKTEHPHGLNPKDFETIFTTDKPIIFAFHGYPWLIHRLTYRQPNHNNLHVRGYKEEGTTTTPFDMVVLNDLDRFHLVMDVIDRVPKLGYKAAYVKQQLQDKLIEHKHYISQHGEDMPDISDWQWPY.

Belongs to the XFP family. The cofactor is thiamine diphosphate.

The protein is Probable phosphoketolase 2 of Nostoc sp. (strain PCC 7120 / SAG 25.82 / UTEX 2576).